The primary structure comprises 185 residues: Early nodulin-like protein 17 (185 aa).

The first 21 residues, 1–21 (MARRDQLVSFLCFFLIVSAVA), serve as a signal peptide directing secretion. Residues 37-137 (KQYVVGGRSG…GQRLMINVDS (101 aa)) form the Phytocyanin domain. N-linked (GlcNAc...) asparagine glycans are attached at residues asparagine 79 and asparagine 94. Cysteine 93 and cysteine 125 are oxidised to a cystine. A disordered region spans residues 136-155 (DSAPSPSPSPSPAPQEAATA). A lipid anchor (GPI-anchor amidated serine) is attached at serine 156. The propeptide at 157 to 185 (AATSSSAATAAHALLLAAMAMMGLILGEW) is removed in mature form.

This sequence belongs to the early nodulin-like (ENODL) family. Expressed ubiquitously. Accumulates mainly in anthers, stigmas and ovaries.

Its subcellular location is the cell membrane. May act as a carbohydrate transporter. Required for male fertility and seed yield. This is Early nodulin-like protein 17 from Oryza sativa subsp. japonica (Rice).